We begin with the raw amino-acid sequence, 937 residues long: Vacuolar membrane protease (937 aa).

At 1-16 the chain is on the cytoplasmic side; it reads PNGFVKFIRSIFGYRK. The helical transmembrane segment at 17–37 threads the bilayer; that stretch reads TSLTLFVILTYVAVLLLAYLD. At 38–373 the chain is on the vacuolar side; sequence HSLYYSVDLP…FPTSQVVVAS (336 aa). Residues Asn106 and Asn140 are each glycosylated (N-linked (GlcNAc...) asparagine). 2 residues coordinate Zn(2+): His154 and Asp166. The active-site Proton acceptor is Glu201. Residues Glu202, Glu227, and His300 each contribute to the Zn(2+) site. Residues 374-394 form a helical membrane-spanning segment; sequence ILLLVLIPGISIPFLIIIFGY. Residues 395-407 are Cytoplasmic-facing; the sequence is KKNWELSFVNVTK. The chain crosses the membrane as a helical span at residues 408–428; sequence FPISLAISAALLNLFTNGFIV. At 429-437 the chain is on the vacuolar side; that stretch reads PFNQFLPNS. Residues 438–458 form a helical membrane-spanning segment; sequence SPFALVAILFATFLLLNYLIL. Residues 459 to 475 lie on the Cytoplasmic side of the membrane; it reads NGINLIFVSYKIVNHDE. Residues 476–496 traverse the membrane as a helical segment; sequence KLISIIETSFLYWVVLIYSTA. The Vacuolar portion of the chain corresponds to 497 to 510; it reads KLANNVIGDDHSGE. The chain crosses the membrane as a helical span at residues 511–531; that stretch reads FPIIFLCALQAVASIFGLIGW. The Cytoplasmic portion of the chain corresponds to 532–580; it reads SFKPVPKEHYVVVPQEEAEPLLGSSDNFNYGSPDVEDDRLVSDGSYDWS. The chain crosses the membrane as a helical span at residues 581–601; the sequence is IQFLTIVPISTYLIYNSGFLV. At 602–618 the chain is on the vacuolar side; that stretch reads VDGINKSIQESLISQNL. The N-linked (GlcNAc...) asparagine glycan is linked to Asn606. The helical transmembrane segment at 619–639 threads the bilayer; the sequence is IYKLLQTFAISLSIPLLPFIF. The Cytoplasmic portion of the chain corresponds to 640 to 643; that stretch reads KVNR. The chain crosses the membrane as a helical span at residues 644-664; it reads LFVLALFLISTIGVLFVATAD. Topologically, residues 665–937 are vacuolar; sequence SFNVANPLKL…LVSVSKTVEL (273 aa). N-linked (GlcNAc...) asparagine glycosylation is found at Asn758, Asn870, and Asn887.

This sequence belongs to the peptidase M28 family. Zn(2+) is required as a cofactor.

It is found in the vacuole membrane. In terms of biological role, may be involved in vacuolar sorting and osmoregulation. In Scheffersomyces stipitis (strain ATCC 58785 / CBS 6054 / NBRC 10063 / NRRL Y-11545) (Yeast), this protein is Vacuolar membrane protease.